The primary structure comprises 165 residues: Nucleotide-binding protein Suden_0039 (165 aa).

It belongs to the YajQ family.

In terms of biological role, nucleotide-binding protein. The sequence is that of Nucleotide-binding protein Suden_0039 from Sulfurimonas denitrificans (strain ATCC 33889 / DSM 1251) (Thiomicrospira denitrificans (strain ATCC 33889 / DSM 1251)).